A 187-amino-acid chain; its full sequence is MPKRGLFVGRFQPVHNGHIKALEFVFSQVDEVIIGIGSAQASHTLKNPFTTSERMEMLIRALDEAGLEKRYYLIPLPDINFNAIWSTYVQSMVPRFDVVFTGNSLVAQLFRERGYEVIVQPMFRKDILSATEIRKRMVEGEPWEELVPKSVAEFIKEIKGVERIKMLATNLENSEKELQAPIRIPEF.

This sequence belongs to the archaeal NMN adenylyltransferase family.

The protein resides in the cytoplasm. The enzyme catalyses beta-nicotinamide D-ribonucleotide + ATP + H(+) = diphosphate + NAD(+). It functions in the pathway cofactor biosynthesis; NAD(+) biosynthesis; NAD(+) from nicotinamide D-ribonucleotide: step 1/1. The protein is Nicotinamide-nucleotide adenylyltransferase of Thermococcus onnurineus (strain NA1).